Consider the following 283-residue polypeptide: Pantothenate synthetase (283 aa).

Position 30 to 37 (30 to 37 (MGYLHEGH)) interacts with ATP. The active-site Proton donor is the histidine 37. A (R)-pantoate-binding site is contributed by glutamine 61. Position 61 (glutamine 61) interacts with beta-alanine. 147 to 150 (GLKD) contributes to the ATP binding site. Glutamine 153 contributes to the (R)-pantoate binding site. ATP-binding positions include valine 176 and 184-187 (KSSR).

The protein belongs to the pantothenate synthetase family. As to quaternary structure, homodimer.

It localises to the cytoplasm. It carries out the reaction (R)-pantoate + beta-alanine + ATP = (R)-pantothenate + AMP + diphosphate + H(+). The protein operates within cofactor biosynthesis; (R)-pantothenate biosynthesis; (R)-pantothenate from (R)-pantoate and beta-alanine: step 1/1. Functionally, catalyzes the condensation of pantoate with beta-alanine in an ATP-dependent reaction via a pantoyl-adenylate intermediate. This is Pantothenate synthetase from Halalkalibacterium halodurans (strain ATCC BAA-125 / DSM 18197 / FERM 7344 / JCM 9153 / C-125) (Bacillus halodurans).